Here is a 175-residue protein sequence, read N- to C-terminus: B9 domain-containing protein 2 (175 aa).

A C2 B9-type domain is found at 2–118 (AEVHVIGQII…DCPTWRPLGS (117 aa)).

Belongs to the B9D family. In terms of assembly, part of the tectonic-like complex (also named B9 complex). Interacts with TUBG1. In terms of tissue distribution, highest expression in thymus and skeletal muscle. Also expressed in spleen, kidney, lung, heart, microglia and liver. Detected in brain (at protein level).

Its subcellular location is the cytoplasm. The protein localises to the cytoskeleton. It localises to the cilium basal body. It is found in the cilium axoneme. The protein resides in the nucleus. In terms of biological role, component of the tectonic-like complex, a complex localized at the transition zone of primary cilia and acting as a barrier that prevents diffusion of transmembrane proteins between the cilia and plasma membranes. In Mus musculus (Mouse), this protein is B9 domain-containing protein 2 (B9d2).